The sequence spans 207 residues: MADS-box protein AGL71 (207 aa).

Positions 1–61 constitute an MADS-box domain; that stretch reads MVRGKIEIKK…GRLHEYSSSQ (61 aa). The region spanning 88-178 is the K-box domain; sequence LQELKMEIDR…LEEVNMHHSS (91 aa).

The protein localises to the nucleus. MADS-box transcription factor that acts with AGL42 and AGL72 in the control of flowering time. Promotes flowering at the shoot apical and axillary meristems. Seems to act through a gibberellin-dependent pathway. Interacts genetically with SOC1 and its expression is directly regulated by SOC1. This Arabidopsis thaliana (Mouse-ear cress) protein is MADS-box protein AGL71 (AGL71).